We begin with the raw amino-acid sequence, 457 residues long: Multidrug resistance protein MdtK (457 aa).

12 helical membrane passes run 11–31 (LLAL…MGFV), 53–73 (IWLP…PVIA), 93–113 (WLAS…GYII), 127–147 (AVGY…FQVA), 160–180 (GMVM…IFIY), 188–208 (LGGI…FIAM), 243–263 (LPIA…ALLV), 276–296 (IALN…AAVT), 314–334 (AART…IFTV), 357–377 (LMLL…GSGI), 387–407 (IFFI…YILA), and 418–438 (PAGF…LMML).

The protein belongs to the multi antimicrobial extrusion (MATE) (TC 2.A.66.1) family. MdtK subfamily.

The protein resides in the cell inner membrane. In terms of biological role, multidrug efflux pump that functions probably as a Na(+)/drug antiporter. The chain is Multidrug resistance protein MdtK from Salmonella arizonae (strain ATCC BAA-731 / CDC346-86 / RSK2980).